The chain runs to 777 residues: Serine/threonine-protein kinase PLK4 (777 aa).

Residues 14 to 268 (YEVQHLLGKG…LEQVLRHPFL (255 aa)) form the Protein kinase domain. Residues 20 to 28 (LGKGGFASV) and lysine 43 each bind ATP. Aspartate 139 functions as the Proton acceptor in the catalytic mechanism. Over residues 371-381 (TNNLAPFTSDS) the composition is skewed to polar residues. Residues 371-390 (TNNLAPFTSDSDMIPSPVGE) are disordered. Positions 390 to 507 (EKRLLMPPLE…ARFVGLVKSK (118 aa)) constitute a Cryptic POLO box 1 (CPB1) domain. A Cryptic POLO box 2 (CPB2) domain is found at 508–611 (TPKITFFSSL…GRRPAADMHA (104 aa)). Residues 669-748 (PIKRITVPEI…MPQLQMKLKC (80 aa)) form the POLO box domain.

Belongs to the protein kinase superfamily. Ser/Thr protein kinase family. CDC5/Polo subfamily. In terms of assembly, homodimer. Post-translationally, ubiquitinated by the SCF(Slimb) ubiquitin ligase complex; leading to its degradation by the proteasome during interphase and regulating centriole number and ensuring the block to centriole reduplication.

It is found in the cytoplasm. It localises to the cytoskeleton. The protein resides in the microtubule organizing center. The protein localises to the centrosome. Its subcellular location is the centriole. It catalyses the reaction L-seryl-[protein] + ATP = O-phospho-L-seryl-[protein] + ADP + H(+). The enzyme catalyses L-threonyl-[protein] + ATP = O-phospho-L-threonyl-[protein] + ADP + H(+). Its function is as follows. Serine/threonine-protein kinase that plays a central role in centriole duplication. Able to trigger procentriole formation on the surface of the mother centriole cylinder, using mother centriole as a platform, leading to the recruitment of centriole biogenesis proteins such as sas-6. When overexpressed, it is able to induce centrosome amplification through the simultaneous generation of multiple procentrioles adjoining each parental centriole during S phase. Centrosome amplification following overexpression can initiate tumorigenesis, highlighting the importance of centrosome regulation in cancers. This Drosophila pseudoobscura pseudoobscura (Fruit fly) protein is Serine/threonine-protein kinase PLK4 (SAK).